The following is a 558-amino-acid chain: Arginine--tRNA ligase (558 aa).

The short motif at 129 to 139 (ANPTGPLHVGH) is the 'HIGH' region element.

It belongs to the class-I aminoacyl-tRNA synthetase family. In terms of assembly, monomer.

The protein localises to the cytoplasm. It catalyses the reaction tRNA(Arg) + L-arginine + ATP = L-arginyl-tRNA(Arg) + AMP + diphosphate. This is Arginine--tRNA ligase from Polaromonas naphthalenivorans (strain CJ2).